A 404-amino-acid chain; its full sequence is Cysteine desulfurase IscS (404 aa).

Residues 75 to 76 (AT), Asn-155, Gln-183, and 203 to 205 (SAH) contribute to the pyridoxal 5'-phosphate site. An N6-(pyridoxal phosphate)lysine modification is found at Lys-206. Position 243 (Thr-243) interacts with pyridoxal 5'-phosphate. Cys-328 functions as the Cysteine persulfide intermediate in the catalytic mechanism. Position 328 (Cys-328) interacts with [2Fe-2S] cluster.

Belongs to the class-V pyridoxal-phosphate-dependent aminotransferase family. NifS/IscS subfamily. In terms of assembly, homodimer. Forms a heterotetramer with IscU, interacts with other sulfur acceptors. It depends on pyridoxal 5'-phosphate as a cofactor.

The protein resides in the cytoplasm. It carries out the reaction (sulfur carrier)-H + L-cysteine = (sulfur carrier)-SH + L-alanine. It participates in cofactor biosynthesis; iron-sulfur cluster biosynthesis. In terms of biological role, master enzyme that delivers sulfur to a number of partners involved in Fe-S cluster assembly, tRNA modification or cofactor biosynthesis. Catalyzes the removal of elemental sulfur atoms from cysteine to produce alanine. Functions as a sulfur delivery protein for Fe-S cluster synthesis onto IscU, an Fe-S scaffold assembly protein, as well as other S acceptor proteins. The chain is Cysteine desulfurase IscS from Pseudomonas syringae pv. tomato (strain ATCC BAA-871 / DC3000).